Reading from the N-terminus, the 427-residue chain is Mucorpepsin (427 aa).

Positions 1–22 are cleaved as a signal peptide; the sequence is MLFSKISSAILLTAASFALTSA. A propeptide spans 23–66 (activation peptide); that stretch reads RPVSKQSDADDKLLALPLTSVNRKYSQTKHGQQAAEKLGGIKAF. Positions 86 to 418 constitute a Peptidase A1 domain; the sequence is YAIPVSIGTP…DFGKNRIGFA (333 aa). Residue Asp104 is part of the active site. A disulfide bond links Cys117 and Cys123. N-linked (GlcNAc...) asparagine glycosylation is present at Asn254. Asp303 is a catalytic residue. A disulfide bond links Cys338 and Cys382.

This sequence belongs to the peptidase A1 family.

The enzyme catalyses Hydrolysis of proteins, favoring hydrophobic residues at P1 and P1'. Clots milk. Does not accept Lys at P1, and hence does not activate trypsinogen.. In terms of biological role, this enzyme, capable of clotting milk is frequently used for cheese production. This chain is Mucorpepsin, found in Rhizomucor pusillus.